A 297-amino-acid chain; its full sequence is MAAWVPCRKWGWAAVSFGRHRGLIASLARKPPWAWWLSACRQKTTLSFLKRPELPSLAYKRLKGKNPGIIFIPGYLSNMNGKKAVAIEEFCKSIGHAFIRFDYSGVGSSDGNLAECSVGKWRKDVLSILDDIAEGPQILVGSSLGGWLMLHAAIARPEKVIALIGIASATDGVVTQFHSLPVEMQKEIEMKGEWSLPSKYNKEGYYSIPYSFIKEAAHHCLLHSPIPVTCPVRLLHGMKDEIVPWHRSLQVADRVVSPDVDVILRKHSDHRMKETADIHLLICTIDDLIDKLSTVTH.

Residues 1–43 constitute a mitochondrion transit peptide; it reads MAAWVPCRKWGWAAVSFGRHRGLIASLARKPPWAWWLSACRQK. The AB hydrolase-1 domain maps to 69–181; the sequence is IIFIPGYLSN…GVVTQFHSLP (113 aa). Active-site charge relay system residues include Ser-143, Asp-240, and His-270.

The protein belongs to the AB hydrolase superfamily. As to expression, expressed in epididymal sperm but not in testicular sperm (at protein level).

The protein resides in the mitochondrion. It catalyses the reaction S-hexadecanoyl-L-cysteinyl-[protein] + H2O = L-cysteinyl-[protein] + hexadecanoate + H(+). The catalysed reaction is mycophenolic acid O-acyl-beta-D-glucuronide + H2O = mycophenolate + D-glucuronate + H(+). Its activity is regulated as follows. Inhibited by palmostatin-B. Its function is as follows. Acts as an acyl-protein thioesterase that hydrolyzes fatty acids from acylated residues in proteins. Regulates the mitochondrial S-depalmitoylation of the nucleophilic active site residue of peroxiredoxin-5/PRDX5, a key antioxidant protein, therefore modulating mitochondrial antioxidant ability. Also catalyzes the deglucuronidation of mycophenolic acid acyl-glucuronide, an active metabolite of the immunosuppressant drug mycophenolate. This chain is Palmitoyl-protein thioesterase ABHD10, mitochondrial, found in Rattus norvegicus (Rat).